Here is a 159-residue protein sequence, read N- to C-terminus: Large ribosomal subunit protein uL10 (159 aa).

The protein belongs to the universal ribosomal protein uL10 family. As to quaternary structure, part of the ribosomal stalk of the 50S ribosomal subunit. The N-terminus interacts with L11 and the large rRNA to form the base of the stalk. The C-terminus forms an elongated spine to which L12 dimers bind in a sequential fashion forming a multimeric L10(L12)X complex.

Forms part of the ribosomal stalk, playing a central role in the interaction of the ribosome with GTP-bound translation factors. In Campylobacter jejuni (strain RM1221), this protein is Large ribosomal subunit protein uL10.